A 289-amino-acid polypeptide reads, in one-letter code: F-box protein PP2-A11 (289 aa).

The F-box domain occupies 23-69 (QPGLGDLPESCVALILQNLDPVEICRFSKLNTAFHGASWADFVWESK).

In terms of assembly, part of a SCF (ASK-cullin-F-box) protein ligase complex. Interacts with SKP1A/ASK1.

The protein resides in the nucleus. It participates in protein modification; protein ubiquitination. In terms of biological role, component of SCF(ASK-cullin-F-box) E3 ubiquitin ligase complexes, which may mediate the ubiquitination and subsequent proteasomal degradation of target proteins. In Arabidopsis thaliana (Mouse-ear cress), this protein is F-box protein PP2-A11 (PP2A11).